The chain runs to 160 residues: Ureidoglycolate lyase (160 aa).

The protein belongs to the ureidoglycolate lyase family. Homodimer. Ni(2+) serves as cofactor.

It catalyses the reaction (S)-ureidoglycolate = urea + glyoxylate. It participates in nitrogen metabolism; (S)-allantoin degradation. Catalyzes the catabolism of the allantoin degradation intermediate (S)-ureidoglycolate, generating urea and glyoxylate. Involved in the anaerobic utilization of allantoin as sole nitrogen source. Reinforces the induction of genes involved in the degradation of allantoin and glyoxylate by producing glyoxylate. This chain is Ureidoglycolate lyase, found in Escherichia coli O6:H1 (strain CFT073 / ATCC 700928 / UPEC).